Here is a 126-residue protein sequence, read N- to C-terminus: Holo-[acyl-carrier-protein] synthase (126 aa).

Residues Asp9 and Glu58 each coordinate Mg(2+).

Belongs to the P-Pant transferase superfamily. AcpS family. It depends on Mg(2+) as a cofactor.

Its subcellular location is the cytoplasm. It catalyses the reaction apo-[ACP] + CoA = holo-[ACP] + adenosine 3',5'-bisphosphate + H(+). Functionally, transfers the 4'-phosphopantetheine moiety from coenzyme A to a Ser of acyl-carrier-protein. The protein is Holo-[acyl-carrier-protein] synthase of Citrobacter koseri (strain ATCC BAA-895 / CDC 4225-83 / SGSC4696).